Reading from the N-terminus, the 295-residue chain is Shikimate dehydrogenase (NADP(+)) (295 aa).

Shikimate is bound by residues 24–26 and Thr71; that span reads SRS. The active-site Proton acceptor is the Lys75. NADP(+) is bound at residue Glu87. Asn96 and Asp111 together coordinate shikimate. NADP(+) is bound by residues 136–140, 160–165, and Met233; these read GAGGA and NRTASR. Tyr235 contributes to the shikimate binding site. Gly256 serves as a coordination point for NADP(+).

The protein belongs to the shikimate dehydrogenase family. As to quaternary structure, homodimer.

It catalyses the reaction shikimate + NADP(+) = 3-dehydroshikimate + NADPH + H(+). Its pathway is metabolic intermediate biosynthesis; chorismate biosynthesis; chorismate from D-erythrose 4-phosphate and phosphoenolpyruvate: step 4/7. Functionally, involved in the biosynthesis of the chorismate, which leads to the biosynthesis of aromatic amino acids. Catalyzes the reversible NADPH linked reduction of 3-dehydroshikimate (DHSA) to yield shikimate (SA). This Cupriavidus taiwanensis (strain DSM 17343 / BCRC 17206 / CCUG 44338 / CIP 107171 / LMG 19424 / R1) (Ralstonia taiwanensis (strain LMG 19424)) protein is Shikimate dehydrogenase (NADP(+)).